We begin with the raw amino-acid sequence, 410 residues long: Dipeptidase 1 (410 aa).

A signal peptide spans 1 to 16 (MVIIWWFWSLLAICAS). Zn(2+) contacts are provided by histidine 36 and aspartate 38. Cysteine 87 and cysteine 170 are disulfide-bonded. Asparagine 121 carries an N-linked (GlcNAc...) asparagine glycan. Glutamate 141 is a binding site for Zn(2+). Substrate is bound at residue histidine 168. Zn(2+) is bound by residues histidine 214 and histidine 235. Cysteine 242 and cysteine 274 are oxidised to a cystine. Residue arginine 246 participates in substrate binding. Asparagine 258 carries an N-linked (GlcNAc...) asparagine glycan. Aspartate 304 contributes to the substrate binding site. N-linked (GlcNAc...) asparagine glycosylation occurs at asparagine 332. Serine 384 carries the GPI-anchor amidated serine lipid modification. Residues 385 to 410 (QAHSIHLQTGALVASLASLLFRLHLL) constitute a propeptide, removed in mature form.

It belongs to the metallo-dependent hydrolases superfamily. Peptidase M19 family. Homodimer; disulfide-linked. Zn(2+) serves as cofactor. As to expression, expressed in heart, lung, skeletal muscle, kidney, liver, and testis. Not detected in brain and spleen.

The protein resides in the apical cell membrane. The protein localises to the cell projection. It is found in the microvillus membrane. It carries out the reaction an L-aminoacyl-L-amino acid + H2O = 2 an L-alpha-amino acid. It catalyses the reaction leukotriene D4 + H2O = leukotriene E4 + glycine. The enzyme catalyses L-cystine-bis-glycine + 2 H2O = L-cystine + 2 glycine. The catalysed reaction is a beta-lactam + H2O = a substituted beta-amino acid. It carries out the reaction glycyldehydrophenylalanine + H2O = 2,3-didehydrophenylalanine + glycine. With respect to regulation, inhibited by L-penicillamine. Inhibited by cilastatin. Functionally, hydrolyzes a wide range of dipeptides including the conversion of leukotriene D4 to leukotriene E4. Hydrolyzes cystinyl-bis-glycine (cys-bis-gly) formed during glutathione degradation. Also possesses beta lactamase activity and hydrolytically inactivates beta-lactam antibiotics. In terms of biological role, independently of its dipeptidase activity, acts as an adhesion receptor for neutrophil recruitment from bloodstream into inflamed lungs and liver. This is Dipeptidase 1 (Dpep1) from Mus musculus (Mouse).